Here is a 330-residue protein sequence, read N- to C-terminus: GLPRVAVDLVAPPLVHPHSQVAAGAPKVVQFRMSIEEKKMVADDDGTTAQAMTFNGSVPGPTLVVHEGDYIELTLVNPATNSMPHNVDFHAATGALGGAGLTQVVPGQEAVLRFKADRSGTFVYHCAPAGMVPWHVVSGMNGALMVLPRDGLRDAAGAALAYDRVYTIGESDLYVPKAADGNYSDYPALASAYADTVAVMRTLTPSHAVFNGAVGALTGANALTAAVGESVLIIHSQANRDSRPHLIGGHGDWVWTTGKFANPPQLNMETWFIPGGSAAAALYTFKQPGTYAYLSHNLIEAMELGAAAQASVEGQWDDDLMTSVAAPGPA.

Plastocyanin-like domains follow at residues 1-165 and 166-330; these read GLPR…YDRV and YTIG…PGPA. His-85, His-90, His-125, Cys-126, His-135, Met-140, and His-296 together coordinate Cu cation.

It belongs to the multicopper oxidase family. In terms of assembly, homotrimer. Cu(2+) is required as a cofactor. The cofactor is Cu(+). It depends on FAD as a cofactor.

It localises to the periplasm. It catalyses the reaction nitric oxide + Fe(III)-[cytochrome c] + H2O = Fe(II)-[cytochrome c] + nitrite + 2 H(+). The protein operates within nitrogen metabolism; nitrate reduction (denitrification); dinitrogen from nitrate: step 2/4. This is Copper-containing nitrite reductase (nirK) from Alcaligenes xylosoxydans xylosoxydans (Achromobacter xylosoxidans).